Consider the following 137-residue polypeptide: QELLDVDGEILRNGGSYYILPAFRGKGGGLELAKTEGETCPLTVVQARSETDRGLPASIWSPPRIAIIRPGFSLNIEFRPRNPSACHRESSLQWKVEEESQQVKIAVKEDARGFGPFRIRPHRDDYKLVYCDEGQKR.

Residues Cys40 and Cys86 are joined by a disulfide bond.

It belongs to the protease inhibitor I3 (leguminous Kunitz-type inhibitor) family. In terms of assembly, heterodimer of an alpha and a beta chain linked by a disulfide bond.

Its function is as follows. Inhibition of trypsin. This Neltuma juliflora (Mesquite) protein is Kunitz-type trypsin inhibitor alpha chain.